The chain runs to 309 residues: ATP synthase gamma chain (309 aa).

Belongs to the ATPase gamma chain family. F-type ATPases have 2 components, CF(1) - the catalytic core - and CF(0) - the membrane proton channel. CF(1) has five subunits: alpha(3), beta(3), gamma(1), delta(1), epsilon(1). CF(0) has three main subunits: a, b and c.

It localises to the cell membrane. Produces ATP from ADP in the presence of a proton gradient across the membrane. The gamma chain is believed to be important in regulating ATPase activity and the flow of protons through the CF(0) complex. This chain is ATP synthase gamma chain, found in Ligilactobacillus salivarius (strain UCC118) (Lactobacillus salivarius).